We begin with the raw amino-acid sequence, 127 residues long: Glycine cleavage system H protein 1 (127 aa).

A Lipoyl-binding domain is found at 20–101 (LLTVGITAYA…LGEAWFFRFR (82 aa)). Position 60 is an N6-lipoyllysine (lysine 60).

The protein belongs to the GcvH family. The glycine cleavage system is composed of four proteins: P, T, L and H. Requires (R)-lipoate as cofactor.

The glycine cleavage system catalyzes the degradation of glycine. The H protein shuttles the methylamine group of glycine from the P protein to the T protein. This chain is Glycine cleavage system H protein 1, found in Pseudomonas aeruginosa (strain ATCC 15692 / DSM 22644 / CIP 104116 / JCM 14847 / LMG 12228 / 1C / PRS 101 / PAO1).